The primary structure comprises 239 residues: 1-(5-phosphoribosyl)-5-[(5-phosphoribosylamino)methylideneamino] imidazole-4-carboxamide isomerase (239 aa).

The active-site Proton acceptor is Asp-8. Asp-129 functions as the Proton donor in the catalytic mechanism.

This sequence belongs to the HisA/HisF family.

It is found in the cytoplasm. It carries out the reaction 1-(5-phospho-beta-D-ribosyl)-5-[(5-phospho-beta-D-ribosylamino)methylideneamino]imidazole-4-carboxamide = 5-[(5-phospho-1-deoxy-D-ribulos-1-ylimino)methylamino]-1-(5-phospho-beta-D-ribosyl)imidazole-4-carboxamide. Its pathway is amino-acid biosynthesis; L-histidine biosynthesis; L-histidine from 5-phospho-alpha-D-ribose 1-diphosphate: step 4/9. This chain is 1-(5-phosphoribosyl)-5-[(5-phosphoribosylamino)methylideneamino] imidazole-4-carboxamide isomerase, found in Bacillus cereus (strain ATCC 10987 / NRS 248).